Here is a 425-residue protein sequence, read N- to C-terminus: Serine--tRNA ligase (425 aa).

230-232 (TGE) is an L-serine binding site. 261 to 263 (RKE) provides a ligand contact to ATP. Position 284 (E284) interacts with L-serine. 348 to 351 (EISS) lines the ATP pocket. S385 lines the L-serine pocket.

It belongs to the class-II aminoacyl-tRNA synthetase family. Type-1 seryl-tRNA synthetase subfamily. As to quaternary structure, homodimer. The tRNA molecule binds across the dimer.

It is found in the cytoplasm. It catalyses the reaction tRNA(Ser) + L-serine + ATP = L-seryl-tRNA(Ser) + AMP + diphosphate + H(+). The enzyme catalyses tRNA(Sec) + L-serine + ATP = L-seryl-tRNA(Sec) + AMP + diphosphate + H(+). The protein operates within aminoacyl-tRNA biosynthesis; selenocysteinyl-tRNA(Sec) biosynthesis; L-seryl-tRNA(Sec) from L-serine and tRNA(Sec): step 1/1. Functionally, catalyzes the attachment of serine to tRNA(Ser). Is also able to aminoacylate tRNA(Sec) with serine, to form the misacylated tRNA L-seryl-tRNA(Sec), which will be further converted into selenocysteinyl-tRNA(Sec). The chain is Serine--tRNA ligase from Wolbachia sp. subsp. Brugia malayi (strain TRS).